We begin with the raw amino-acid sequence, 115 residues long: DNA-directed RNA polymerase II subunit RPB11-b2 (115 aa).

This sequence belongs to the archaeal Rpo11/eukaryotic RPB11/RPC19 RNA polymerase subunit family. In terms of assembly, component of the RNA polymerase II (Pol II) complex consisting of 12 subunits.

Its subcellular location is the nucleus. Its function is as follows. DNA-dependent RNA polymerase catalyzes the transcription of DNA into RNA using the four ribonucleoside triphosphates as substrates. Component of RNA polymerase II which synthesizes mRNA precursors and many functional non-coding RNAs. Pol II is the central component of the basal RNA polymerase II transcription machinery. It is composed of mobile elements that move relative to each other. RPB11 is part of the core element with the central large cleft. The protein is DNA-directed RNA polymerase II subunit RPB11-b2 (POLR2J3) of Homo sapiens (Human).